Here is a 562-residue protein sequence, read N- to C-terminus: Bacillolysin (562 aa).

Positions 1 to 24 are cleaved as a signal peptide; sequence MKKKKQALKVLLSVGILSSSFAFA. A propeptide spans 25–245 (activation peptide); it reads HTSSAAPNNV…KQAAKPAAKP (221 aa). Positions 303, 305, and 384 each coordinate Ca(2+). Zn(2+) is bound at residue His388. Glu389 is an active-site residue. Zn(2+)-binding residues include His392 and Glu412. Positions 423, 429, 431, 433, 436, 439, 440, and 446 each coordinate Ca(2+). His477 functions as the Proton donor in the catalytic mechanism.

It belongs to the peptidase M4 family. Requires Ca(2+) as cofactor. Zn(2+) is required as a cofactor.

The protein resides in the secreted. It carries out the reaction Similar, but not identical, to that of thermolysin.. Functionally, extracellular zinc metalloprotease. This Priestia megaterium (strain DSM 319 / IMG 1521) (Bacillus megaterium) protein is Bacillolysin (nprM).